Consider the following 1142-residue polypeptide: Auxin response factor 5 (1142 aa).

The TF-B3 DNA-binding region spans 148–250 (FCKTLTASDT…QLLLGIRRAN (103 aa)). A PB1 domain is found at 1009 to 1093 (RTFTKVYKRG…RCIRILSPQE (85 aa)). The tract at residues 1114–1142 (SSSDGVNGWRPRCDQNPGNPSIGPYDQFE) is disordered.

This sequence belongs to the ARF family. Homodimers and heterodimers. As to expression, expressed in roots, culms, leaves and young panicles.

The protein localises to the nucleus. In terms of biological role, auxin response factors (ARFs) are transcriptional factors that bind specifically to the DNA sequence 5'-TGTCTC-3' found in the auxin-responsive promoter elements (AuxREs). This Oryza sativa subsp. japonica (Rice) protein is Auxin response factor 5 (ARF5).